The chain runs to 156 residues: ATP synthase subunit b (156 aa).

A helical transmembrane segment spans residues 7 to 29 (LIGQMGTFLVFWWFVNKVIWPMF).

Belongs to the ATPase B chain family. In terms of assembly, F-type ATPases have 2 components, F(1) - the catalytic core - and F(0) - the membrane proton channel. F(1) has five subunits: alpha(3), beta(3), gamma(1), delta(1), epsilon(1). F(0) has three main subunits: a(1), b(2) and c(10-14). The alpha and beta chains form an alternating ring which encloses part of the gamma chain. F(1) is attached to F(0) by a central stalk formed by the gamma and epsilon chains, while a peripheral stalk is formed by the delta and b chains.

Its subcellular location is the cell inner membrane. F(1)F(0) ATP synthase produces ATP from ADP in the presence of a proton or sodium gradient. F-type ATPases consist of two structural domains, F(1) containing the extramembraneous catalytic core and F(0) containing the membrane proton channel, linked together by a central stalk and a peripheral stalk. During catalysis, ATP synthesis in the catalytic domain of F(1) is coupled via a rotary mechanism of the central stalk subunits to proton translocation. Functionally, component of the F(0) channel, it forms part of the peripheral stalk, linking F(1) to F(0). This is ATP synthase subunit b from Dichelobacter nodosus (strain VCS1703A).